A 462-amino-acid chain; its full sequence is Elongation factor 1-alpha 1 (462 aa).

At Gly-2 the chain carries N,N,N-trimethylglycine. The region spanning 5–242 (KTHINIVVIG…DCILPPTRPT (238 aa)) is the tr-type G domain. The segment at 14–21 (GHVDSGKS) is G1. A GTP-binding site is contributed by 14–21 (GHVDSGKS). The tract at residues 70–74 (GITID) is G2. Positions 91–94 (DAPG) are G3. GTP-binding positions include 153–156 (NKMD) and 194–196 (SGW). The segment at 153-156 (NKMD) is G4. Residues 194-196 (SGW) are G5. 5-glutamyl glycerylphosphorylethanolamine is present on residues Glu-301 and Glu-374.

The protein belongs to the TRAFAC class translation factor GTPase superfamily. Classic translation factor GTPase family. EF-Tu/EF-1A subfamily.

The protein resides in the cytoplasm. It catalyses the reaction GTP + H2O = GDP + phosphate + H(+). Translation elongation factor that catalyzes the GTP-dependent binding of aminoacyl-tRNA (aa-tRNA) to the A-site of ribosomes during the elongation phase of protein synthesis. Base pairing between the mRNA codon and the aa-tRNA anticodon promotes GTP hydrolysis, releasing the aa-tRNA from EEF1A1 and allowing its accommodation into the ribosome. The growing protein chain is subsequently transferred from the P-site peptidyl tRNA to the A-site aa-tRNA, extending it by one amino acid through ribosome-catalyzed peptide bond formation. The chain is Elongation factor 1-alpha 1 (EEF1A) from Gallus gallus (Chicken).